We begin with the raw amino-acid sequence, 352 residues long: uncharacterized protein (352 aa).

The N-terminal 55 residues, 1–55 (MAMAALTSSSSAITLLNKPFLPNRSSFFSSDSQSPLLRFSASTSVRSRFPSAAIS), are a transit peptide targeting the chloroplast.

It belongs to the methyltransferase superfamily.

The protein resides in the plastid. It localises to the chloroplast. The protein localises to the plastoglobule. This is an uncharacterized protein from Arabidopsis thaliana (Mouse-ear cress).